The primary structure comprises 236 residues: 2-C-methyl-D-erythritol 4-phosphate cytidylyltransferase (236 aa).

The protein belongs to the IspD/TarI cytidylyltransferase family. IspD subfamily. Homodimer.

It catalyses the reaction 2-C-methyl-D-erythritol 4-phosphate + CTP + H(+) = 4-CDP-2-C-methyl-D-erythritol + diphosphate. It functions in the pathway isoprenoid biosynthesis; isopentenyl diphosphate biosynthesis via DXP pathway; isopentenyl diphosphate from 1-deoxy-D-xylulose 5-phosphate: step 2/6. Catalyzes the formation of 4-diphosphocytidyl-2-C-methyl-D-erythritol from CTP and 2-C-methyl-D-erythritol 4-phosphate (MEP). The polypeptide is 2-C-methyl-D-erythritol 4-phosphate cytidylyltransferase (Enterobacter sp. (strain 638)).